We begin with the raw amino-acid sequence, 120 residues long: MLSLNTQKTIDNLHNVFTKKNIPPIRIGDNVKVGVRIIEGNKERVQFYEGTVIAKKNSSINTTLTVRKVLQGIGVERIFLIHSPKVDSIEVLRSSKVRRSKLYYLRNLKGKASRLKQQFR.

It belongs to the bacterial ribosomal protein bL19 family.

Its subcellular location is the plastid. The protein resides in the chloroplast. This chain is Large ribosomal subunit protein bL19c (rpl19), found in Trieres chinensis (Marine centric diatom).